We begin with the raw amino-acid sequence, 466 residues long: Phosphomethylpyrimidine synthase (466 aa).

Residues asparagine 80, methionine 109, tyrosine 139, histidine 175, 195–197 (SRG), 236–239 (DSLR), and glutamate 275 each bind substrate. Histidine 279 serves as a coordination point for Zn(2+). Tyrosine 302 is a binding site for substrate. Histidine 343 is a Zn(2+) binding site. [4Fe-4S] cluster is bound by residues cysteine 423, cysteine 426, and cysteine 431.

The protein belongs to the ThiC family. It depends on [4Fe-4S] cluster as a cofactor.

It catalyses the reaction 5-amino-1-(5-phospho-beta-D-ribosyl)imidazole + S-adenosyl-L-methionine = 4-amino-2-methyl-5-(phosphooxymethyl)pyrimidine + CO + 5'-deoxyadenosine + formate + L-methionine + 3 H(+). Its pathway is cofactor biosynthesis; thiamine diphosphate biosynthesis. In terms of biological role, catalyzes the synthesis of the hydroxymethylpyrimidine phosphate (HMP-P) moiety of thiamine from aminoimidazole ribotide (AIR) in a radical S-adenosyl-L-methionine (SAM)-dependent reaction. This Prochlorococcus marinus (strain NATL2A) protein is Phosphomethylpyrimidine synthase.